A 329-amino-acid chain; its full sequence is Replication factor C small subunit 1 (329 aa).

ATP is bound at residue 44 to 51 (GPPGTGKT).

This sequence belongs to the activator 1 small subunits family. RfcS subfamily. As to quaternary structure, heteromultimer composed of small subunits (RfcS) and large subunits (RfcL).

Its function is as follows. Part of the RFC clamp loader complex which loads the PCNA sliding clamp onto DNA. The protein is Replication factor C small subunit 1 of Pyrobaculum islandicum (strain DSM 4184 / JCM 9189 / GEO3).